We begin with the raw amino-acid sequence, 249 residues long: tRNA (guanine-N(7)-)-methyltransferase (249 aa).

S-adenosyl-L-methionine is bound by residues E80, E105, D132, and D155. D155 is an active-site residue. Substrate contacts are provided by residues K159, D191, and 228-231 (TKFE).

This sequence belongs to the class I-like SAM-binding methyltransferase superfamily. TrmB family.

It catalyses the reaction guanosine(46) in tRNA + S-adenosyl-L-methionine = N(7)-methylguanosine(46) in tRNA + S-adenosyl-L-homocysteine. The protein operates within tRNA modification; N(7)-methylguanine-tRNA biosynthesis. In terms of biological role, catalyzes the formation of N(7)-methylguanine at position 46 (m7G46) in tRNA. This is tRNA (guanine-N(7)-)-methyltransferase from Mannheimia succiniciproducens (strain KCTC 0769BP / MBEL55E).